A 603-amino-acid polypeptide reads, in one-letter code: Cell division control protein 48 homolog B (603 aa).

Residues 63 to 70 and 327 to 334 each bind ATP; these read GPPGTGKT and GPPGCSKT.

The protein belongs to the AAA ATPase family.

It is found in the nucleus. It localises to the cytoplasm. Its subcellular location is the cytoskeleton. The protein localises to the phragmoplast. In terms of biological role, probably functions in cell division and growth processes. Interacts with certain SNAREs as part of specialized membrane fusion events where vesicles from the same organelle fuse (homotypic fusion). In Arabidopsis thaliana (Mouse-ear cress), this protein is Cell division control protein 48 homolog B (CDC48B).